We begin with the raw amino-acid sequence, 490 residues long: Aspartyl/glutamyl-tRNA(Asn/Gln) amidotransferase subunit B (490 aa).

It belongs to the GatB/GatE family. GatB subfamily. As to quaternary structure, heterotrimer of A, B and C subunits.

The enzyme catalyses L-glutamyl-tRNA(Gln) + L-glutamine + ATP + H2O = L-glutaminyl-tRNA(Gln) + L-glutamate + ADP + phosphate + H(+). The catalysed reaction is L-aspartyl-tRNA(Asn) + L-glutamine + ATP + H2O = L-asparaginyl-tRNA(Asn) + L-glutamate + ADP + phosphate + 2 H(+). Its function is as follows. Allows the formation of correctly charged Asn-tRNA(Asn) or Gln-tRNA(Gln) through the transamidation of misacylated Asp-tRNA(Asn) or Glu-tRNA(Gln) in organisms which lack either or both of asparaginyl-tRNA or glutaminyl-tRNA synthetases. The reaction takes place in the presence of glutamine and ATP through an activated phospho-Asp-tRNA(Asn) or phospho-Glu-tRNA(Gln). In Burkholderia pseudomallei (strain K96243), this protein is Aspartyl/glutamyl-tRNA(Asn/Gln) amidotransferase subunit B.